The following is a 224-amino-acid chain: Large ribosomal subunit protein uL3 (224 aa).

Q158 is subject to N5-methylglutamine.

This sequence belongs to the universal ribosomal protein uL3 family. Part of the 50S ribosomal subunit. Forms a cluster with proteins L14 and L19. In terms of processing, methylated by PrmB.

Its function is as follows. One of the primary rRNA binding proteins, it binds directly near the 3'-end of the 23S rRNA, where it nucleates assembly of the 50S subunit. The sequence is that of Large ribosomal subunit protein uL3 from Paracidovorax citrulli (strain AAC00-1) (Acidovorax citrulli).